Consider the following 479-residue polypeptide: Ribosomal RNA small subunit methyltransferase F (479 aa).

Residues 125–131 (AAAPGSK), E149, D176, and D194 each bind S-adenosyl-L-methionine. The active-site Nucleophile is C247.

Belongs to the class I-like SAM-binding methyltransferase superfamily. RsmB/NOP family.

The protein resides in the cytoplasm. The enzyme catalyses cytidine(1407) in 16S rRNA + S-adenosyl-L-methionine = 5-methylcytidine(1407) in 16S rRNA + S-adenosyl-L-homocysteine + H(+). In terms of biological role, specifically methylates the cytosine at position 1407 (m5C1407) of 16S rRNA. The protein is Ribosomal RNA small subunit methyltransferase F of Salmonella paratyphi A (strain ATCC 9150 / SARB42).